We begin with the raw amino-acid sequence, 322 residues long: Aspartate carbamoyltransferase catalytic subunit (322 aa).

2 residues coordinate carbamoyl phosphate: arginine 65 and threonine 66. Residue lysine 93 participates in L-aspartate binding. Carbamoyl phosphate contacts are provided by arginine 115, histidine 143, and glutamine 146. 2 residues coordinate L-aspartate: arginine 176 and arginine 230. Glycine 271 and proline 272 together coordinate carbamoyl phosphate.

Belongs to the aspartate/ornithine carbamoyltransferase superfamily. ATCase family. Heterododecamer (2C3:3R2) of six catalytic PyrB chains organized as two trimers (C3), and six regulatory PyrI chains organized as three dimers (R2).

The enzyme catalyses carbamoyl phosphate + L-aspartate = N-carbamoyl-L-aspartate + phosphate + H(+). The protein operates within pyrimidine metabolism; UMP biosynthesis via de novo pathway; (S)-dihydroorotate from bicarbonate: step 2/3. Its function is as follows. Catalyzes the condensation of carbamoyl phosphate and aspartate to form carbamoyl aspartate and inorganic phosphate, the committed step in the de novo pyrimidine nucleotide biosynthesis pathway. This is Aspartate carbamoyltransferase catalytic subunit from Brucella abortus (strain S19).